Here is a 364-residue protein sequence, read N- to C-terminus: Alanine racemase (364 aa).

The active-site Proton acceptor; specific for D-alanine is lysine 35. Lysine 35 bears the N6-(pyridoxal phosphate)lysine mark. Arginine 130 serves as a coordination point for substrate. Tyrosine 256 acts as the Proton acceptor; specific for L-alanine in catalysis. A substrate-binding site is contributed by methionine 304.

It belongs to the alanine racemase family. It depends on pyridoxal 5'-phosphate as a cofactor.

The enzyme catalyses L-alanine = D-alanine. Its pathway is amino-acid biosynthesis; D-alanine biosynthesis; D-alanine from L-alanine: step 1/1. Functionally, catalyzes the interconversion of L-alanine and D-alanine. May also act on other amino acids. In Polaromonas sp. (strain JS666 / ATCC BAA-500), this protein is Alanine racemase (alr).